We begin with the raw amino-acid sequence, 448 residues long: Na(+)-translocating NADH-quinone reductase subunit A (448 aa).

The protein belongs to the NqrA family. In terms of assembly, composed of six subunits; NqrA, NqrB, NqrC, NqrD, NqrE and NqrF.

The enzyme catalyses a ubiquinone + n Na(+)(in) + NADH + H(+) = a ubiquinol + n Na(+)(out) + NAD(+). Its function is as follows. NQR complex catalyzes the reduction of ubiquinone-1 to ubiquinol by two successive reactions, coupled with the transport of Na(+) ions from the cytoplasm to the periplasm. NqrA to NqrE are probably involved in the second step, the conversion of ubisemiquinone to ubiquinol. The chain is Na(+)-translocating NADH-quinone reductase subunit A from Alcanivorax borkumensis (strain ATCC 700651 / DSM 11573 / NCIMB 13689 / SK2).